We begin with the raw amino-acid sequence, 437 residues long: Nuclear envelope integral membrane protein 1 (437 aa).

The first 44 residues, 1–44 (MAGGIKVSVWSAVGPGPRCWGAGGGGGATWLLLVVAGCVVCGSA), serve as a signal peptide directing secretion. Residue asparagine 123 is glycosylated (N-linked (GlcNAc...) asparagine). 5 helical membrane passes run 159–179 (PKLFLVFLLGLTLFFCGDLLS), 183–203 (IFYYSTGMSVGIVASLLIVIF), 214–234 (PIYVILVGGWSFSLYLIQLVF), 244–264 (YWHYLLSYILTVGFMSFAVCY), and 288–308 (GLMYSSIQIPHVAFALIVIAL). The a; required for its colocalization with lamins at the nuclear envelope stretch occupies residues 184 to 295 (FYYSTGMSVG…GLGLMYSSIQ (112 aa)). The b; required for interaction with RAN-GTP stretch occupies residues 334–403 (PVPPRLLTEE…LTPNEVSVHE (70 aa)). A required for nuclear localization region spans residues 334–437 (PVPPRLLTEE…PTFTQNNFLT (104 aa)). A phosphoserine mark is found at serine 366, serine 419, and serine 420. A compositionally biased stretch (acidic residues) spans 415–425 (DEELSSEEEGS). The interval 415–437 (DEELSSEEEGSEYPTFTQNNFLT) is disordered. Polar residues predominate over residues 428–437 (PTFTQNNFLT).

It belongs to the NEMP family. Homooligomer. Interacts with RAN-GTP. Interacts with EMD. Post-translationally, phosphorylated. Phosphorylation may regulate its interaction with RAN-GTP. In the ovary, expression is strongest in primordial follicle oocytes and rapidly declines as oocytes mature and move from the cortex (at protein level).

Its subcellular location is the nucleus inner membrane. It localises to the nucleus envelope. Together with EMD, contributes to nuclear envelope stiffness in germ cells. Required for female fertility. Essential for normal erythropoiesis. Required for efficient nuclear envelope opening and enucleation during the late stages of erythroblast maturation. The sequence is that of Nuclear envelope integral membrane protein 1 (Nemp1) from Mus musculus (Mouse).